The sequence spans 87 residues: Small ribosomal subunit protein bS20 (87 aa).

Positions 1–28 (MANIKSQQKRNRTNERARLRNKSVKSSL) are disordered.

Belongs to the bacterial ribosomal protein bS20 family.

Its function is as follows. Binds directly to 16S ribosomal RNA. In Mycobacterium marinum (strain ATCC BAA-535 / M), this protein is Small ribosomal subunit protein bS20.